The following is a 250-amino-acid chain: uncharacterized protein (250 aa).

A run of 7 helical transmembrane segments spans residues 36-56 (VALGLVVSGALAYATSSVPAV), 73-93 (PLYMVVAFAPLVLMLIAGFAM), 101-121 (AGALYWTIVSLIGASLGSVML), 128-148 (VAATFFVTATAFGGLSLFGYT), 156-176 (FGSFLMMGVIGLIVASIVSIF), 180-200 (PALLFAINVLGVLIFSGLIAY), and 225-245 (FGALSLYINFINLFQFLLSFF).

The protein belongs to the BI1 family.

The protein localises to the cell membrane. This is an uncharacterized protein from Caulobacter vibrioides (strain ATCC 19089 / CIP 103742 / CB 15) (Caulobacter crescentus).